A 65-amino-acid polypeptide reads, in one-letter code: Large ribosomal subunit protein uL29 (65 aa).

It belongs to the universal ribosomal protein uL29 family.

This is Large ribosomal subunit protein uL29 from Syntrophus aciditrophicus (strain SB).